Here is a 217-residue protein sequence, read N- to C-terminus: ATP-binding protein BexA (217 aa).

Residues 2–217 (IRVNNVCKKY…AYQYYNETQK (216 aa)) form the ABC transporter domain. 38–45 (GRNGAGKS) lines the ATP pocket.

Belongs to the ABC transporter superfamily.

It is found in the cell inner membrane. Its function is as follows. Putative ATP-binding protein, and an energy-coupling component of capsule polysaccharide export apparatus. This is ATP-binding protein BexA (bexA) from Haemophilus influenzae.